A 466-amino-acid polypeptide reads, in one-letter code: 3-isopropylmalate dehydratase large subunit (466 aa).

Residues C347, C407, and C410 each contribute to the [4Fe-4S] cluster site.

The protein belongs to the aconitase/IPM isomerase family. LeuC type 1 subfamily. In terms of assembly, heterodimer of LeuC and LeuD. The cofactor is [4Fe-4S] cluster.

It catalyses the reaction (2R,3S)-3-isopropylmalate = (2S)-2-isopropylmalate. Its pathway is amino-acid biosynthesis; L-leucine biosynthesis; L-leucine from 3-methyl-2-oxobutanoate: step 2/4. In terms of biological role, catalyzes the isomerization between 2-isopropylmalate and 3-isopropylmalate, via the formation of 2-isopropylmaleate. The polypeptide is 3-isopropylmalate dehydratase large subunit (Vibrio campbellii (strain ATCC BAA-1116)).